Reading from the N-terminus, the 245-residue chain is tRNA pseudouridine synthase A (245 aa).

The Nucleophile role is filled by aspartate 52. Tyrosine 111 is a binding site for substrate.

The protein belongs to the tRNA pseudouridine synthase TruA family. Homodimer.

The enzyme catalyses uridine(38/39/40) in tRNA = pseudouridine(38/39/40) in tRNA. Formation of pseudouridine at positions 38, 39 and 40 in the anticodon stem and loop of transfer RNAs. This Rickettsia akari (strain Hartford) protein is tRNA pseudouridine synthase A.